Here is a 247-residue protein sequence, read N- to C-terminus: NAD(P)H-quinone oxidoreductase subunit K (247 aa).

4 residues coordinate [4Fe-4S] cluster: cysteine 63, cysteine 64, cysteine 128, and cysteine 159.

This sequence belongs to the complex I 20 kDa subunit family. NDH-1 can be composed of about 15 different subunits; different subcomplexes with different compositions have been identified which probably have different functions. It depends on [4Fe-4S] cluster as a cofactor.

The protein resides in the cellular thylakoid membrane. It carries out the reaction a plastoquinone + NADH + (n+1) H(+)(in) = a plastoquinol + NAD(+) + n H(+)(out). It catalyses the reaction a plastoquinone + NADPH + (n+1) H(+)(in) = a plastoquinol + NADP(+) + n H(+)(out). NDH-1 shuttles electrons from an unknown electron donor, via FMN and iron-sulfur (Fe-S) centers, to quinones in the respiratory and/or the photosynthetic chain. The immediate electron acceptor for the enzyme in this species is believed to be plastoquinone. Couples the redox reaction to proton translocation, and thus conserves the redox energy in a proton gradient. Cyanobacterial NDH-1 also plays a role in inorganic carbon-concentration. The sequence is that of NAD(P)H-quinone oxidoreductase subunit K from Microcystis aeruginosa (strain NIES-843 / IAM M-2473).